Consider the following 318-residue polypeptide: Ankyrin repeat and SOCS box protein 7 (318 aa).

7 ANK repeats span residues 13 to 42 (QEEL…SPNG), 46 to 75 (NGWT…DPTV), 80 to 109 (GGFT…RSDI), 116 to 145 (DGWT…EVDP), 149 to 178 (KGTT…NIDI), 180 to 208 (NGFL…DTNL), and 213 to 242 (DGQT…DTNT). Positions 265 to 318 (LDFLQEVTRQPRNLQDLCRIKIRQCIGLQNLKLLDELPIAKVMKDYLKHKFDDI) constitute an SOCS box domain.

It belongs to the ankyrin SOCS box (ASB) family. Interacts with CUL5. Interacts with RNF7. Interacts with PSRC1.

The protein operates within protein modification; protein ubiquitination. Its function is as follows. Probable substrate-recognition component of a SCF-like ECS (Elongin-Cullin-SOCS-box protein) E3 ubiquitin-protein ligase complex which mediates the ubiquitination and subsequent proteasomal degradation of target proteins. Plays a role in spindle dynamics and genome integrity by targeting the mitotic progression protein PSRC1 for proteasomal degradation in a cell cycle-dependent manner. Also participates in meiosis by mediating the proper attachment between kinetochores and microtubules. In Homo sapiens (Human), this protein is Ankyrin repeat and SOCS box protein 7 (ASB7).